A 45-amino-acid polypeptide reads, in one-letter code: LYMGTATDNGATAMLNLVESLKYSWVPSTFSGQGAATPYDSNLVK.

The protein belongs to the glycosyl hydrolase 10 (cellulase F) family.

Its subcellular location is the secreted. The protein localises to the extracellular space. The enzyme catalyses Endohydrolysis of (1-&gt;4)-beta-D-xylosidic linkages in xylans.. It catalyses the reaction Endohydrolysis of (1-&gt;4)-beta-D-glucosidic linkages in cellulose, lichenin and cereal beta-D-glucans.. It participates in glycan degradation; xylan degradation. In terms of biological role, has xylanase, avicelase and cellobiohydrolase activity. This chain is Endo-1,4-beta-xylanase Xyn10A, found in Gloeophyllum trabeum (Brown rot fungus).